Here is a 200-residue protein sequence, read N- to C-terminus: Pyridoxal 5'-phosphate synthase subunit PdxT (200 aa).

An L-glutamine-binding site is contributed by 52 to 54 (GES). The active-site Nucleophile is the Cys-84. Residues Arg-116 and 145–146 (IR) each bind L-glutamine. Residues His-181 and Glu-183 each act as charge relay system in the active site.

This sequence belongs to the glutaminase PdxT/SNO family. As to quaternary structure, in the presence of PdxS, forms a dodecamer of heterodimers. Only shows activity in the heterodimer.

The catalysed reaction is aldehydo-D-ribose 5-phosphate + D-glyceraldehyde 3-phosphate + L-glutamine = pyridoxal 5'-phosphate + L-glutamate + phosphate + 3 H2O + H(+). It catalyses the reaction L-glutamine + H2O = L-glutamate + NH4(+). Its pathway is cofactor biosynthesis; pyridoxal 5'-phosphate biosynthesis. In terms of biological role, catalyzes the hydrolysis of glutamine to glutamate and ammonia as part of the biosynthesis of pyridoxal 5'-phosphate. The resulting ammonia molecule is channeled to the active site of PdxS. The sequence is that of Pyridoxal 5'-phosphate synthase subunit PdxT from Saccharolobus islandicus (strain M.16.27) (Sulfolobus islandicus).